Reading from the N-terminus, the 468-residue chain is MQYLPIFLNIRGQQCLVVGGGTVAVRKVALLRQAGAEVKVIAPKLHEQLQEWADKGKITAQQASFSETEIKSCYLVIAATDDSSLNEQVYHLATAQGVLVNVADCPRFCDFILPSIVDRSPVIVAVSSGGASPVLARLLRARLETLIPQAYGRLGQFAARYRSRIKQRITGIRARRIFWEKVLQGSIAERIFAGQEEEAEGALEAALEGGFVPEQGEVYLVGAGPGDPDLLTFRALRLMQQADVVFHDRLVSPEVLALVRREAERIYVGKKRSWHAVRQEEINMMLVRSAREGKRVLRLKGGDPFIFGRGGEEIATLAAENIPFQVVPGITAASGCASYAGIPLTHRDHAHACIFVTGQLKEGRLSLNWQALVQPQQTIVVYMGLSGLEILCQELIAHGMPAVTPAALVQQGTTSRQRVLTGTLATLPDIVQGEDIHAPTLVIIGGVVALYPQLAWFKVPDREPLDAR.

Residues 1 to 203 (MQYLPIFLNI…GQEEEAEGAL (203 aa)) form a precorrin-2 dehydrogenase /sirohydrochlorin ferrochelatase region. Residues 22 to 23 (TV) and 43 to 44 (PK) each bind NAD(+). Serine 128 bears the Phosphoserine mark. Positions 216 to 468 (GEVYLVGAGP…VPDREPLDAR (253 aa)) are uroporphyrinogen-III C-methyltransferase. Proline 225 serves as a coordination point for S-adenosyl-L-methionine. Aspartate 248 functions as the Proton acceptor in the catalytic mechanism. Lysine 270 functions as the Proton donor in the catalytic mechanism. S-adenosyl-L-methionine-binding positions include 301–303 (GGD), isoleucine 306, 331–332 (TA), methionine 383, and glycine 412.

In the N-terminal section; belongs to the precorrin-2 dehydrogenase / sirohydrochlorin ferrochelatase family. This sequence in the C-terminal section; belongs to the precorrin methyltransferase family.

It carries out the reaction uroporphyrinogen III + 2 S-adenosyl-L-methionine = precorrin-2 + 2 S-adenosyl-L-homocysteine + H(+). The catalysed reaction is precorrin-2 + NAD(+) = sirohydrochlorin + NADH + 2 H(+). The enzyme catalyses siroheme + 2 H(+) = sirohydrochlorin + Fe(2+). The protein operates within cofactor biosynthesis; adenosylcobalamin biosynthesis; precorrin-2 from uroporphyrinogen III: step 1/1. It participates in cofactor biosynthesis; adenosylcobalamin biosynthesis; sirohydrochlorin from precorrin-2: step 1/1. It functions in the pathway porphyrin-containing compound metabolism; siroheme biosynthesis; precorrin-2 from uroporphyrinogen III: step 1/1. Its pathway is porphyrin-containing compound metabolism; siroheme biosynthesis; siroheme from sirohydrochlorin: step 1/1. The protein operates within porphyrin-containing compound metabolism; siroheme biosynthesis; sirohydrochlorin from precorrin-2: step 1/1. Multifunctional enzyme that catalyzes the SAM-dependent methylations of uroporphyrinogen III at position C-2 and C-7 to form precorrin-2 via precorrin-1. Then it catalyzes the NAD-dependent ring dehydrogenation of precorrin-2 to yield sirohydrochlorin. Finally, it catalyzes the ferrochelation of sirohydrochlorin to yield siroheme. The protein is Siroheme synthase of Nitrosococcus oceani (strain ATCC 19707 / BCRC 17464 / JCM 30415 / NCIMB 11848 / C-107).